The sequence spans 518 residues: Probable protein phosphatase 2C 14 (518 aa).

Composition is skewed to low complexity over residues 1–10 (MVEAAAGRRS) and 86–105 (PQRQQPRLAAQTPRGPAPGA). Disordered stretches follow at residues 1 to 31 (MVEAAAGRRSGANRRRPSGGGERRRQQQQHQ) and 86 to 108 (PQRQQPRLAAQTPRGPAPGADGR). The PPM-type phosphatase domain occupies 129–437 (VASLYTLQGK…DDCAVVCLFL (309 aa)). Positions 165 and 166 each coordinate Mn(2+). Positions 192 to 222 (TDEGRQTSTSSIKSNGDETGSPGNMGRDAEQ) are disordered. The span at 197–213 (QTSTSSIKSNGDETGSP) shows a compositional bias: polar residues. The Mn(2+) site is built by D382 and D428.

It belongs to the PP2C family. Requires Mg(2+) as cofactor. It depends on Mn(2+) as a cofactor.

It carries out the reaction O-phospho-L-seryl-[protein] + H2O = L-seryl-[protein] + phosphate. It catalyses the reaction O-phospho-L-threonyl-[protein] + H2O = L-threonyl-[protein] + phosphate. This is Probable protein phosphatase 2C 14 from Oryza sativa subsp. japonica (Rice).